A 1314-amino-acid polypeptide reads, in one-letter code: E3 ubiquitin-protein ligase RNF123 (1314 aa).

A2 is subject to N-acetylalanine. Residues V74–L254 enclose the B30.2/SPRY domain. The interval H460–P481 is disordered. Basic and acidic residues predominate over residues S462–P481. Phosphoserine is present on S675. R683 is modified (asymmetric dimethylarginine). Residues W968–W974 are interaction with NFKB1. Positions 1254, 1257, 1269, 1271, 1274, 1277, 1288, and 1291 each coordinate Zn(2+). The segment at C1254–K1292 adopts an RING-type zinc-finger fold.

In terms of assembly, component of the KPC complex composed of RNF123/KPC1 and UBAC1/KPC2. Interacts with UBAC1 and CDKN1B via its N-terminal domain. Interacts with RIGI (via N-terminus) and IFIH1 (via N-terminus). Ubiquitinated, leading to its degradation. Deubiquitinated by USP19, thereby stimulating CDKN1B ubiquitin-dependent degradation.

It localises to the cytoplasm. It carries out the reaction S-ubiquitinyl-[E2 ubiquitin-conjugating enzyme]-L-cysteine + [acceptor protein]-L-lysine = [E2 ubiquitin-conjugating enzyme]-L-cysteine + N(6)-ubiquitinyl-[acceptor protein]-L-lysine.. Its pathway is protein modification; protein ubiquitination. In terms of biological role, catalytic subunit of the KPC complex that acts as E3 ubiquitin-protein ligase. Promotes the ubiquitination and proteasome-mediated degradation of CDKN1B which is the cyclin-dependent kinase inhibitor at the G0-G1 transition of the cell cycle. Also acts as a key regulator of the NF-kappa-B signaling by promoting maturation of the NFKB1 component of NF-kappa-B. Acts by catalyzing ubiquitination of the NFKB1 p105 precursor, leading to limited proteasomal degradation of NFKB1 p105 and generation of the active NFKB1 p50 subunit. Functions also as an inhibitor of innate antiviral signaling mediated by RIGI and IFIH1 independently of its E3 ligase activity. Interacts with the N-terminal CARD domains of RIGI and IFIH1 and competes with the downstream adapter MAVS. This chain is E3 ubiquitin-protein ligase RNF123, found in Oryctolagus cuniculus (Rabbit).